A 427-amino-acid polypeptide reads, in one-letter code: UDP-N-acetyl-D-mannosamine dehydrogenase (427 aa).

Residues Y19, I20, D39, R44, T91, and T130 each coordinate NAD(+). UDP-N-acetyl-alpha-D-mannosaminouronate is bound by residues R155, V156, K207, N211, R214, H245, R247, and G258. K207 serves as the catalytic Proton donor/acceptor. C261 (nucleophile) is an active-site residue. The UDP-N-acetyl-alpha-D-mannosaminouronate site is built by Y318 and K319. Position 326 (R326) interacts with NAD(+). K404 lines the UDP-N-acetyl-alpha-D-mannosaminouronate pocket.

This sequence belongs to the UDP-glucose/GDP-mannose dehydrogenase family. In terms of assembly, homotetramer; probably dimer of dimers.

The catalysed reaction is UDP-N-acetyl-alpha-D-mannosamine + 2 NAD(+) + H2O = UDP-N-acetyl-alpha-D-mannosaminouronate + 2 NADH + 3 H(+). Catalyzes the four-electron oxidation of UDP-N-acetyl-D-mannosamine (UDP-ManNAc), reducing NAD(+) and releasing UDP-N-acetylmannosaminuronic acid (UDP-ManNAcA). This chain is UDP-N-acetyl-D-mannosamine dehydrogenase (wecC), found in Methanococcus vannielii (strain ATCC 35089 / DSM 1224 / JCM 13029 / OCM 148 / SB).